We begin with the raw amino-acid sequence, 209 residues long: Pyroglutamyl-peptidase 1 (209 aa).

Active-site residues include E85, C149, and H168.

This sequence belongs to the peptidase C15 family. In terms of assembly, monomer.

Its subcellular location is the cytoplasm. The enzyme catalyses Release of an N-terminal pyroglutamyl group from a polypeptide, the second amino acid generally not being Pro.. Inhibited by transition metal ions including Ni(2+), Zn(2+), and Cu(2+) and by sulfhydryl-blocking agents. Its function is as follows. Removes 5-oxoproline from various penultimate amino acid residues except L-proline. This is Pyroglutamyl-peptidase 1 (PGPEP1) from Homo sapiens (Human).